The following is a 52-amino-acid chain: NADH dehydrogenase [ubiquinone] 1 alpha subcomplex subunit 4 homolog (52 aa).

Residues 14 to 30 (LYPLGAAVATAVGFATY) traverse the membrane as a helical segment.

This sequence belongs to the complex I NDUFA4 subunit family.

The protein resides in the mitochondrion inner membrane. Its function is as follows. Accessory subunit of the mitochondrial membrane respiratory chain NADH dehydrogenase (Complex I), that is believed to be not involved in catalysis. Complex I functions in the transfer of electrons from NADH to the respiratory chain. The immediate electron acceptor for the enzyme is believed to be ubiquinone. The protein is NADH dehydrogenase [ubiquinone] 1 alpha subcomplex subunit 4 homolog of Schizosaccharomyces pombe (strain 972 / ATCC 24843) (Fission yeast).